Consider the following 204-residue polypeptide: Leucyl/phenylalanyl-tRNA--protein transferase (204 aa).

It belongs to the L/F-transferase family.

It localises to the cytoplasm. It catalyses the reaction N-terminal L-lysyl-[protein] + L-leucyl-tRNA(Leu) = N-terminal L-leucyl-L-lysyl-[protein] + tRNA(Leu) + H(+). The catalysed reaction is N-terminal L-arginyl-[protein] + L-leucyl-tRNA(Leu) = N-terminal L-leucyl-L-arginyl-[protein] + tRNA(Leu) + H(+). It carries out the reaction L-phenylalanyl-tRNA(Phe) + an N-terminal L-alpha-aminoacyl-[protein] = an N-terminal L-phenylalanyl-L-alpha-aminoacyl-[protein] + tRNA(Phe). In terms of biological role, functions in the N-end rule pathway of protein degradation where it conjugates Leu, Phe and, less efficiently, Met from aminoacyl-tRNAs to the N-termini of proteins containing an N-terminal arginine or lysine. The chain is Leucyl/phenylalanyl-tRNA--protein transferase from Sinorhizobium medicae (strain WSM419) (Ensifer medicae).